Consider the following 430-residue polypeptide: Adenylosuccinate synthetase (430 aa).

GTP is bound by residues 13–19 and 41–43; these read GDEGKGK and GHT. Asp-14 functions as the Proton acceptor in the catalytic mechanism. Mg(2+) contacts are provided by Asp-14 and Gly-41. IMP-binding positions include 14–17, 39–42, Thr-130, Arg-144, Gln-225, Thr-240, and Arg-304; these read DEGK and NAGH. His-42 serves as the catalytic Proton donor. 300–306 provides a ligand contact to substrate; that stretch reads STTGRAR. GTP-binding positions include Arg-306, 332–334, and 414–416; these read KLD and STG.

The protein belongs to the adenylosuccinate synthetase family. Homodimer. The cofactor is Mg(2+).

The protein localises to the cytoplasm. The enzyme catalyses IMP + L-aspartate + GTP = N(6)-(1,2-dicarboxyethyl)-AMP + GDP + phosphate + 2 H(+). Its pathway is purine metabolism; AMP biosynthesis via de novo pathway; AMP from IMP: step 1/2. Functionally, plays an important role in the de novo pathway of purine nucleotide biosynthesis. Catalyzes the first committed step in the biosynthesis of AMP from IMP. The polypeptide is Adenylosuccinate synthetase (Pseudomonas entomophila (strain L48)).